Reading from the N-terminus, the 91-residue chain is Small ribosomal subunit protein uS19 (91 aa).

Belongs to the universal ribosomal protein uS19 family.

Protein S19 forms a complex with S13 that binds strongly to the 16S ribosomal RNA. In Neorickettsia sennetsu (strain ATCC VR-367 / Miyayama) (Ehrlichia sennetsu), this protein is Small ribosomal subunit protein uS19.